The sequence spans 360 residues: Replication-associated protein (360 aa).

The 104-residue stretch at 11 to 114 (SHRNANTFLT…PLAVFERGTF (104 aa)) folds into the CRESS-DNA virus Rep endonuclease domain. Positions 18–21 (FLTY) match the RCR-1 motif. A divalent metal cation is bound by residues Glu-52, His-60, and His-62. The short motif at 60–62 (HLH) is the RCR-2 element. Tyr-100 functions as the For DNA cleavage activity in the catalytic mechanism. Residues 100–103 (YILK) carry the RCR-3 motif. Glu-104 provides a ligand contact to a divalent metal cation. Residues 175-187 (SANKLFPEIQEEF) are oligomerization. 229-236 (GPTRTGKS) contacts ATP. The segment at 252-270 (VDWSSYNEDAIYNIVDDIP) is transactivation. The short motif at 292-303 (KYGKKKKVQKKS) is the Nuclear localization signal element.

This sequence belongs to the geminiviridae Rep protein family. In terms of assembly, homooligomer. Rep binds to repeated DNA motifs (iterons). Forms the O-complex, which is a Rep-DNA complex involved in the initiation of RCR. Part of the C- and V-complexes which are RepA-Rep-DNA complexes involved in the c-sense and v-sense transcription. Requires Mg(2+) as cofactor. Mn(2+) serves as cofactor.

It is found in the host nucleus. Essential for the replication of viral ssDNA. The closed circular ssDNA genome is first converted to a superhelical dsDNA. Rep binds a specific region at the genome origin of replication. It introduces an endonucleolytic nick within the conserved sequence 5'-TAATATTAC-3' in the intergenic region of the genome present in all geminiviruses, thereby initiating the rolling circle replication (RCR). Following cleavage, binds covalently to the 5'-phosphate of DNA as a tyrosyl ester. The cleavage gives rise to a free 3'-OH that serves as a primer for the cellular DNA polymerase. The polymerase synthesizes the (+) strand DNA by rolling circle mechanism. After one round of replication, a Rep-catalyzed nucleotidyl transfer reaction releases a circular single-stranded virus genome, thereby terminating the replication. Displays origin-specific DNA cleavage, nucleotidyl transferase, ATPase and helicase activities. Acts as an inhibitor of C-sense gene transcription. The polypeptide is Replication-associated protein (Maize streak virus genotype A (isolate Nigeria) (MSV)).